A 203-amino-acid chain; its full sequence is LexA repressor 2 (203 aa).

The H-T-H motif DNA-binding region spans 28–48 (MREIARHLNVNGTLGVAKHLE). Residues serine 122 and lysine 159 each act as for autocatalytic cleavage activity in the active site.

Belongs to the peptidase S24 family. As to quaternary structure, homodimer.

It carries out the reaction Hydrolysis of Ala-|-Gly bond in repressor LexA.. In terms of biological role, represses a number of genes involved in the response to DNA damage (SOS response), including recA and lexA. In the presence of single-stranded DNA, RecA interacts with LexA causing an autocatalytic cleavage which disrupts the DNA-binding part of LexA, leading to derepression of the SOS regulon and eventually DNA repair. The sequence is that of LexA repressor 2 from Geobacter sulfurreducens (strain ATCC 51573 / DSM 12127 / PCA).